The primary structure comprises 544 residues: Phosphomannomutase (544 aa).

S145 (phosphoserine intermediate) is an active-site residue. Mg(2+) contacts are provided by S145, D297, D299, and D301.

Belongs to the phosphohexose mutase family. Mg(2+) serves as cofactor.

The catalysed reaction is alpha-D-mannose 1-phosphate = D-mannose 6-phosphate. The sequence is that of Phosphomannomutase (manB) from Mycoplasmoides pirum (Mycoplasma pirum).